The chain runs to 370 residues: Ig heavy chain C region (370 aa).

3 Ig-like domains span residues 40–134 (PTVI…RNIT), 145–237 (PAIK…DSIH), and 247–347 (PSVS…RTVN). N-linked (GlcNAc...) asparagine glycosylation is found at Asn98, Asn132, Asn177, Asn343, Asn347, and Asn357.

In Heterodontus francisci (Horn shark), this protein is Ig heavy chain C region.